The following is a 577-amino-acid chain: Aspartate--tRNA(Asp/Asn) ligase (577 aa).

Residue Glu-171 coordinates L-aspartate. Residues Gln-195–Lys-198 are aspartate. Arg-217 is a binding site for L-aspartate. Residues Arg-217–Glu-219 and Gln-226 each bind ATP. Residue His-444 coordinates L-aspartate. Glu-474 is an ATP binding site. L-aspartate is bound at residue Arg-481. Gly-526–Arg-529 contributes to the ATP binding site.

It belongs to the class-II aminoacyl-tRNA synthetase family. Type 1 subfamily. Homodimer.

Its subcellular location is the cytoplasm. The enzyme catalyses tRNA(Asx) + L-aspartate + ATP = L-aspartyl-tRNA(Asx) + AMP + diphosphate. Its function is as follows. Aspartyl-tRNA synthetase with relaxed tRNA specificity since it is able to aspartylate not only its cognate tRNA(Asp) but also tRNA(Asn). Reaction proceeds in two steps: L-aspartate is first activated by ATP to form Asp-AMP and then transferred to the acceptor end of tRNA(Asp/Asn). This chain is Aspartate--tRNA(Asp/Asn) ligase, found in Helicobacter pylori (strain P12).